The primary structure comprises 428 residues: Trigger factor (428 aa).

The PPIase FKBP-type domain occupies 163–248; it reads GDMVVIDYKG…VHEIKEKELP (86 aa).

Belongs to the FKBP-type PPIase family. Tig subfamily.

The protein resides in the cytoplasm. It carries out the reaction [protein]-peptidylproline (omega=180) = [protein]-peptidylproline (omega=0). In terms of biological role, involved in protein export. Acts as a chaperone by maintaining the newly synthesized protein in an open conformation. Functions as a peptidyl-prolyl cis-trans isomerase. The chain is Trigger factor from Alkaliphilus metalliredigens (strain QYMF).